A 337-amino-acid polypeptide reads, in one-letter code: N-acetyl-gamma-glutamyl-phosphate reductase (337 aa).

The active site involves Cys155.

The protein belongs to the NAGSA dehydrogenase family. Type 1 subfamily.

It localises to the cytoplasm. It catalyses the reaction N-acetyl-L-glutamate 5-semialdehyde + phosphate + NADP(+) = N-acetyl-L-glutamyl 5-phosphate + NADPH + H(+). Its pathway is amino-acid biosynthesis; L-arginine biosynthesis; N(2)-acetyl-L-ornithine from L-glutamate: step 3/4. Functionally, catalyzes the NADPH-dependent reduction of N-acetyl-5-glutamyl phosphate to yield N-acetyl-L-glutamate 5-semialdehyde. The polypeptide is N-acetyl-gamma-glutamyl-phosphate reductase (Alteromonas mediterranea (strain DSM 17117 / CIP 110805 / LMG 28347 / Deep ecotype)).